A 137-amino-acid chain; its full sequence is Large ribosomal subunit protein uL16 (137 aa).

This sequence belongs to the universal ribosomal protein uL16 family. Part of the 50S ribosomal subunit.

Functionally, binds 23S rRNA and is also seen to make contacts with the A and possibly P site tRNAs. This is Large ribosomal subunit protein uL16 from Mesoplasma florum (strain ATCC 33453 / NBRC 100688 / NCTC 11704 / L1) (Acholeplasma florum).